Here is a 201-residue protein sequence, read N- to C-terminus: MAQHDENVVWHPHPVTVAQREQLHGHRGVVLWFTGLSGSGKSTVAGALEEALYQQGVSTYLLDGDNVRHGLCSDLGFSDDDRKENIRRVGEVASLMADAGLVVLTAFISPHRAERQMVRERVGHDRFIEVFVDTPLAICETRDPKGLYKKARAGELKNFTGIDAVYEAPESPQIHLDGQQLVTNLVSQLLDLLRQDDIIRS.

Residue 35 to 42 (GLSGSGKS) coordinates ATP. Catalysis depends on serine 109, which acts as the Phosphoserine intermediate.

It belongs to the APS kinase family.

The enzyme catalyses adenosine 5'-phosphosulfate + ATP = 3'-phosphoadenylyl sulfate + ADP + H(+). It functions in the pathway sulfur metabolism; hydrogen sulfide biosynthesis; sulfite from sulfate: step 2/3. Catalyzes the synthesis of activated sulfate. The protein is Adenylyl-sulfate kinase of Enterobacter sp. (strain 638).